A 140-amino-acid polypeptide reads, in one-letter code: NADH-quinone oxidoreductase subunit I (140 aa).

4Fe-4S ferredoxin-type domains lie at 42-71 (GSFT…VGSI) and 81-110 (ASYE…FNQE). Residues cysteine 51, cysteine 54, cysteine 57, cysteine 61, cysteine 90, cysteine 93, cysteine 96, and cysteine 100 each coordinate [4Fe-4S] cluster.

Belongs to the complex I 23 kDa subunit family. As to quaternary structure, NDH-1 is composed of 14 different subunits. Subunits NuoA, H, J, K, L, M, N constitute the membrane sector of the complex. [4Fe-4S] cluster serves as cofactor.

The protein localises to the cell membrane. It catalyses the reaction a quinone + NADH + 5 H(+)(in) = a quinol + NAD(+) + 4 H(+)(out). NDH-1 shuttles electrons from NADH, via FMN and iron-sulfur (Fe-S) centers, to quinones in the respiratory chain. The immediate electron acceptor for the enzyme in this species is believed to be ubiquinone. Couples the redox reaction to proton translocation (for every two electrons transferred, four hydrogen ions are translocated across the cytoplasmic membrane), and thus conserves the redox energy in a proton gradient. This is NADH-quinone oxidoreductase subunit I from Carboxydothermus hydrogenoformans (strain ATCC BAA-161 / DSM 6008 / Z-2901).